Here is a 46-residue protein sequence, read N- to C-terminus: Defensin-1 (46 aa).

Disulfide bonds link Cys3–Cys46, Cys14–Cys35, Cys20–Cys40, and Cys24–Cys42.

This sequence belongs to the DEFL family. Epidermis and vascular bundles of pods, stems, roots, leaves and wet or dry seeds.

Its function is as follows. Possesses antifungal activity sensitive to inorganic cations. This is Defensin-1 from Pisum sativum (Garden pea).